The sequence spans 458 residues: ATP synthase subunit beta 2 (458 aa).

148 to 155 (GGAGVGKT) is a binding site for ATP.

This sequence belongs to the ATPase alpha/beta chains family. In terms of assembly, F-type ATPases have 2 components, CF(1) - the catalytic core - and CF(0) - the membrane proton channel. CF(1) has five subunits: alpha(3), beta(3), gamma(1), delta(1), epsilon(1). CF(0) has three main subunits: a(1), b(2) and c(9-12). The alpha and beta chains form an alternating ring which encloses part of the gamma chain. CF(1) is attached to CF(0) by a central stalk formed by the gamma and epsilon chains, while a peripheral stalk is formed by the delta and b chains.

It localises to the cell inner membrane. The enzyme catalyses ATP + H2O + 4 H(+)(in) = ADP + phosphate + 5 H(+)(out). In terms of biological role, produces ATP from ADP in the presence of a proton gradient across the membrane. The catalytic sites are hosted primarily by the beta subunits. The polypeptide is ATP synthase subunit beta 2 (Marinomonas sp. (strain MWYL1)).